A 127-amino-acid polypeptide reads, in one-letter code: 3-aminoacrylate deaminase RutC (127 aa).

Belongs to the RutC family.

It carries out the reaction (Z)-3-aminoacrylate + H2O + H(+) = 3-oxopropanoate + NH4(+). Its function is as follows. Involved in pyrimidine catabolism. Catalyzes the deamination of 3-aminoacrylate to malonic semialdehyde, a reaction that can also occur spontaneously. RutC may facilitate the reaction and modulate the metabolic fitness, rather than catalyzing essential functions. This is 3-aminoacrylate deaminase RutC from Pseudomonas savastanoi pv. phaseolicola (strain 1448A / Race 6) (Pseudomonas syringae pv. phaseolicola (strain 1448A / Race 6)).